The primary structure comprises 597 residues: MDHIRNFSIIAHIDHGKSTLADRIIQICGGLSDREMEAQVLDSMDLERERGITIKAQTAALSYRARDGKLYNLNMIDTPGHVDFSYEVSRSLSACEGALLVVDASQGVEAQTVANCYTAIELGVEVVPVLNKIDLPAANPENAIAEIEDVIGIDAADATPCSAKTGMGVEDVLEALIAKVPPPKGDAGQPLQALIIDSWFDNYVGVVMLVRIVNGTLRPKDRIRLMATGAEYPVEHVGVFTPKSKNLESLSAGQVGFIIAGIKELTAAKVGDTVTTVKNAAPEPLPGFKEVKPQVFAGLYPVEANQYDALRESLEKLKLNDASLMYEPEVSQALGFGFRCGFLGLLHMEIVQERLEREFDMDLITTAPTVVYEVVQRDGTTIMVENPAKMPDPSKIEEVREPIVTVNLYMPQDYVGSVITLCTQKRGVQINMQYHGRQVQLTYEIPMGEIVLDFFDRLKSVSRGYASMDYEFKEYRASDVVKVDMLINGDKVDALSVIVHRSQSQYRGREVASKMREIIPRQMYDVAIQATIGAHIIARENIKALRKNVLAKCYGGDITRKKKLLEKQKEGKKRMKQVGSVEIPQEAFLAILRVEDK.

Positions 2–184 (DHIRNFSIIA…ALIAKVPPPK (183 aa)) constitute a tr-type G domain. GTP-binding positions include 14–19 (DHGKST) and 131–134 (NKID).

Belongs to the TRAFAC class translation factor GTPase superfamily. Classic translation factor GTPase family. LepA subfamily.

The protein resides in the cell inner membrane. It catalyses the reaction GTP + H2O = GDP + phosphate + H(+). Functionally, required for accurate and efficient protein synthesis under certain stress conditions. May act as a fidelity factor of the translation reaction, by catalyzing a one-codon backward translocation of tRNAs on improperly translocated ribosomes. Back-translocation proceeds from a post-translocation (POST) complex to a pre-translocation (PRE) complex, thus giving elongation factor G a second chance to translocate the tRNAs correctly. Binds to ribosomes in a GTP-dependent manner. The chain is Elongation factor 4 from Paraburkholderia phymatum (strain DSM 17167 / CIP 108236 / LMG 21445 / STM815) (Burkholderia phymatum).